The sequence spans 142 residues: Large ribosomal subunit protein uL13 (142 aa).

The protein belongs to the universal ribosomal protein uL13 family. In terms of assembly, part of the 50S ribosomal subunit.

Functionally, this protein is one of the early assembly proteins of the 50S ribosomal subunit, although it is not seen to bind rRNA by itself. It is important during the early stages of 50S assembly. The protein is Large ribosomal subunit protein uL13 of Buchnera aphidicola subsp. Schizaphis graminum (strain Sg).